The chain runs to 834 residues: Periplasmic nitrate reductase (834 aa).

A signal peptide (tat-type signal) is located at residues 1–29 (MKLSRREFAKANAAAIAAAAAGLPLASTA). Positions 41–97 (LDWNKAPCRFCGTGCSVMVATRDNRVVATHGDVKAEVNRGLNCVKGYFLSKIMYGVD) constitute a 4Fe-4S Mo/W bis-MGD-type domain. Cysteine 48, cysteine 51, cysteine 55, and cysteine 83 together coordinate [4Fe-4S] cluster. Mo-bis(molybdopterin guanine dinucleotide) contacts are provided by residues lysine 85, glutamine 152, asparagine 177, cysteine 181, 214–221 (WGSNMAEM), 245–249 (STFEH), 264–266 (QTD), methionine 375, glutamine 379, asparagine 485, 511–512 (SD), lysine 534, aspartate 561, and 721–730 (TGRVLEHWHT). Phenylalanine 797 is a binding site for substrate. Asparagine 805 and lysine 822 together coordinate Mo-bis(molybdopterin guanine dinucleotide).

This sequence belongs to the prokaryotic molybdopterin-containing oxidoreductase family. NasA/NapA/NarB subfamily. In terms of assembly, component of the periplasmic nitrate reductase NapAB complex composed of NapA and NapB. [4Fe-4S] cluster is required as a cofactor. Requires Mo-bis(molybdopterin guanine dinucleotide) as cofactor. Post-translationally, predicted to be exported by the Tat system. The position of the signal peptide cleavage has not been experimentally proven.

The protein localises to the periplasm. It catalyses the reaction 2 Fe(II)-[cytochrome] + nitrate + 2 H(+) = 2 Fe(III)-[cytochrome] + nitrite + H2O. In terms of biological role, catalytic subunit of the periplasmic nitrate reductase complex NapAB. Receives electrons from NapB and catalyzes the reduction of nitrate to nitrite. The protein is Periplasmic nitrate reductase of Ectopseudomonas mendocina (strain ymp) (Pseudomonas mendocina).